The primary structure comprises 449 residues: Type 3 secretion system ATPase (449 aa).

ATP is bound at residue Gly-178–Thr-183.

It belongs to the ATPase alpha/beta chains family. T3SS ATPase subfamily. In terms of assembly, the core secretion machinery of the T3SS is composed of approximately 20 different proteins, including cytoplasmic components, a base, an export apparatus and a needle. This subunit is part of the cytosolic complex. Forms homododecamers.

The protein localises to the cytoplasm. It catalyses the reaction ATP + H2O + cellular proteinSide 1 = ADP + phosphate + cellular proteinSide 2.. ATPase component of the type III secretion system (T3SS), also called injectisome, which is used to inject bacterial effector proteins into eukaryotic host cells. Acts as a molecular motor to provide the energy that is required for the export of proteins. Required for type III secretion apparatus (T3SA) formation, proper protein secretion, host cell invasion and virulence. May play a critical role in T3SS substrate recognition, disassembly of the effector/chaperone complex and unfolding of the effector in an ATP-dependent manner prior to secretion. The polypeptide is Type 3 secretion system ATPase (Pseudomonas syringae pv. syringae).